Reading from the N-terminus, the 296-residue chain is Protoheme IX farnesyltransferase (296 aa).

The Cytoplasmic segment spans residues 1-9 (MMFKQYLQV). The chain crosses the membrane as a helical span at residues 10 to 28 (TKPGIIFGNLISVIGGFLL). Residues 29-37 (ASKGSIDYP) are Periplasmic-facing. A helical membrane pass occupies residues 38–56 (LFIYTLVGVSLVVASGCVF). Residues 57–78 (NNYIDRDIDRKMERTKNRVLVK) lie on the Cytoplasmic side of the membrane. A helical membrane pass occupies residues 79–97 (GLISPAVSLVYATLLGIAG). Over 98–107 (FMLLWFGANP) the chain is Periplasmic. Residues 108–126 (LACWLGVMGFVVYVGVYSL) form a helical membrane-spanning segment. The Cytoplasmic portion of the chain corresponds to 127–197 (YMKRHSVYGT…YQAANIPVLP (71 aa)). Residues 198 to 216 (VVKGISVAKNHITLYIIAF) traverse the membrane as a helical segment. Residues 217-228 (AVATLMLSLGGY) are Periplasmic-facing. Residues 229 to 247 (AGYKYLVVAAAVSVWWLGM) form a helical membrane-spanning segment. Residues 248 to 268 (ALRGYKVADDRIWARKLFGFS) are Cytoplasmic-facing. A helical membrane pass occupies residues 269 to 287 (IIAITALSVMMSVDFMVPD). Topologically, residues 288 to 296 (SHTLLAAVW) are periplasmic.

It belongs to the UbiA prenyltransferase family. Protoheme IX farnesyltransferase subfamily.

Its subcellular location is the cell inner membrane. It catalyses the reaction heme b + (2E,6E)-farnesyl diphosphate + H2O = Fe(II)-heme o + diphosphate. The protein operates within porphyrin-containing compound metabolism; heme O biosynthesis; heme O from protoheme: step 1/1. Functionally, converts heme B (protoheme IX) to heme O by substitution of the vinyl group on carbon 2 of heme B porphyrin ring with a hydroxyethyl farnesyl side group. The protein is Protoheme IX farnesyltransferase of Shigella flexneri.